The sequence spans 356 residues: MSTVTITDLARENVRNLTPYQSARRLGGNGDVWLNANEYPTAVEFQLTQQTLNRYPECQPKAVIENYAQYAGVKPEQVLVSRGADEGIELLIRAFCEPGKDAILYCPPTYGMYSVSAETIGVECRTVPTLDNWQLDLQGISDKLDGVKVVYVCSPNNPTGQLINPQDFRTLLELTRGKAIVVADEAYIEFCPQASLAGWLAEYPHLAILRTLSKAFALAGLRCGFTLANEEVINLLMKVIAPYPLSTPVADIAAQALSPQGIVAMRERVAQIIAEREYLIAALKEIPCVEQVFDSETNYILARFKASSAVFKSLWDQGIILRDQNKQPSLSGCLRITVGTREESQRVIDALRAEQV.

N6-(pyridoxal phosphate)lysine is present on Lys-214.

This sequence belongs to the class-II pyridoxal-phosphate-dependent aminotransferase family. Histidinol-phosphate aminotransferase subfamily. As to quaternary structure, homodimer. Requires pyridoxal 5'-phosphate as cofactor.

The catalysed reaction is L-histidinol phosphate + 2-oxoglutarate = 3-(imidazol-4-yl)-2-oxopropyl phosphate + L-glutamate. Its pathway is amino-acid biosynthesis; L-histidine biosynthesis; L-histidine from 5-phospho-alpha-D-ribose 1-diphosphate: step 7/9. This chain is Histidinol-phosphate aminotransferase, found in Escherichia coli O8 (strain IAI1).